The chain runs to 372 residues: Probable NADH-dependent flavin oxidoreductase YqiG (372 aa).

It belongs to the NADH:flavin oxidoreductase/NADH oxidase family.

In Bacillus subtilis (strain 168), this protein is Probable NADH-dependent flavin oxidoreductase YqiG (yqiG).